The following is a 230-amino-acid chain: 2-C-methyl-D-erythritol 4-phosphate cytidylyltransferase (230 aa).

It belongs to the IspD/TarI cytidylyltransferase family. IspD subfamily.

It carries out the reaction 2-C-methyl-D-erythritol 4-phosphate + CTP + H(+) = 4-CDP-2-C-methyl-D-erythritol + diphosphate. Its pathway is isoprenoid biosynthesis; isopentenyl diphosphate biosynthesis via DXP pathway; isopentenyl diphosphate from 1-deoxy-D-xylulose 5-phosphate: step 2/6. Functionally, catalyzes the formation of 4-diphosphocytidyl-2-C-methyl-D-erythritol from CTP and 2-C-methyl-D-erythritol 4-phosphate (MEP). This is 2-C-methyl-D-erythritol 4-phosphate cytidylyltransferase from Laribacter hongkongensis (strain HLHK9).